A 123-amino-acid chain; its full sequence is uncharacterized protein (123 aa).

The protein to insertion element IS1016 transposase.

This is an uncharacterized protein from Haemophilus influenzae (strain ATCC 51907 / DSM 11121 / KW20 / Rd).